The following is a 398-amino-acid chain: 1-deoxy-D-xylulose 5-phosphate reductoisomerase (398 aa).

NADPH contacts are provided by T11, G12, S13, I14, R38, N39, and N125. A 1-deoxy-D-xylulose 5-phosphate-binding site is contributed by K126. E127 is a binding site for NADPH. Residue D151 coordinates Mn(2+). 1-deoxy-D-xylulose 5-phosphate contacts are provided by S152, E153, S179, and H202. Residue E153 participates in Mn(2+) binding. NADPH is bound at residue G208. The 1-deoxy-D-xylulose 5-phosphate site is built by S215, N220, K221, and E224. Position 224 (E224) interacts with Mn(2+).

Belongs to the DXR family. Requires Mg(2+) as cofactor. It depends on Mn(2+) as a cofactor.

The catalysed reaction is 2-C-methyl-D-erythritol 4-phosphate + NADP(+) = 1-deoxy-D-xylulose 5-phosphate + NADPH + H(+). Its pathway is isoprenoid biosynthesis; isopentenyl diphosphate biosynthesis via DXP pathway; isopentenyl diphosphate from 1-deoxy-D-xylulose 5-phosphate: step 1/6. Its function is as follows. Catalyzes the NADPH-dependent rearrangement and reduction of 1-deoxy-D-xylulose-5-phosphate (DXP) to 2-C-methyl-D-erythritol 4-phosphate (MEP). This is 1-deoxy-D-xylulose 5-phosphate reductoisomerase from Burkholderia vietnamiensis (strain G4 / LMG 22486) (Burkholderia cepacia (strain R1808)).